The following is a 378-amino-acid chain: Succinyl-diaminopimelate desuccinylase (378 aa).

His66 serves as a coordination point for Zn(2+). Asp68 is a catalytic residue. Asp99 serves as a coordination point for Zn(2+). The Proton acceptor role is filled by Glu133. Glu134, Glu162, and His348 together coordinate Zn(2+).

It belongs to the peptidase M20A family. DapE subfamily. Homodimer. It depends on Zn(2+) as a cofactor. Co(2+) is required as a cofactor.

The enzyme catalyses N-succinyl-(2S,6S)-2,6-diaminopimelate + H2O = (2S,6S)-2,6-diaminopimelate + succinate. It participates in amino-acid biosynthesis; L-lysine biosynthesis via DAP pathway; LL-2,6-diaminopimelate from (S)-tetrahydrodipicolinate (succinylase route): step 3/3. In terms of biological role, catalyzes the hydrolysis of N-succinyl-L,L-diaminopimelic acid (SDAP), forming succinate and LL-2,6-diaminopimelate (DAP), an intermediate involved in the bacterial biosynthesis of lysine and meso-diaminopimelic acid, an essential component of bacterial cell walls. The chain is Succinyl-diaminopimelate desuccinylase from Halorhodospira halophila (strain DSM 244 / SL1) (Ectothiorhodospira halophila (strain DSM 244 / SL1)).